Consider the following 216-residue polypeptide: 3-isopropylmalate dehydratase small subunit (216 aa).

This sequence belongs to the LeuD family. LeuD type 1 subfamily. Heterodimer of LeuC and LeuD.

It carries out the reaction (2R,3S)-3-isopropylmalate = (2S)-2-isopropylmalate. It participates in amino-acid biosynthesis; L-leucine biosynthesis; L-leucine from 3-methyl-2-oxobutanoate: step 2/4. Its function is as follows. Catalyzes the isomerization between 2-isopropylmalate and 3-isopropylmalate, via the formation of 2-isopropylmaleate. This chain is 3-isopropylmalate dehydratase small subunit, found in Burkholderia ambifaria (strain MC40-6).